A 218-amino-acid chain; its full sequence is Cytochrome b6 (218 aa).

A helical membrane pass occupies residues 35 to 55 (IFYCLGGITLVCFLIQFATGF). Cys38 lines the heme c pocket. The heme b site is built by His89 and His103. 3 helical membrane-spanning segments follow: residues 93–113 (ASMM…TGGF), 119–139 (LTWV…VTGY), and 189–209 (LHTF…FLMI). Residues His190 and His205 each contribute to the heme b site.

Belongs to the cytochrome b family. PetB subfamily. In terms of assembly, the 4 large subunits of the cytochrome b6-f complex are cytochrome b6, subunit IV (17 kDa polypeptide, PetD), cytochrome f and the Rieske protein, while the 4 small subunits are PetG, PetL, PetM and PetN. The complex functions as a dimer. Heme b is required as a cofactor. The cofactor is heme c.

The protein resides in the cellular thylakoid membrane. In terms of biological role, component of the cytochrome b6-f complex, which mediates electron transfer between photosystem II (PSII) and photosystem I (PSI), cyclic electron flow around PSI, and state transitions. This chain is Cytochrome b6, found in Prochlorococcus marinus (strain MIT 9211).